The sequence spans 314 residues: uncharacterized protein (314 aa).

The disordered stretch occupies residues 39–146 (QENVDSDSTD…SDYSSDESNS (108 aa)). Residues 56–76 (STKNVSRNIPKNIPKSISKNI) are compositionally biased toward polar residues. The segment covering 88–131 (IPKNVSKNIPKNVPKNVSKNIPKNIPKNVPNKSRNKYSNYSEDS) has biased composition (low complexity). The span at 132–141 (NYSEDSDYSS) shows a compositional bias: acidic residues.

This is an uncharacterized protein from Acanthamoeba polyphaga mimivirus (APMV).